The primary structure comprises 137 residues: Small ribosomal subunit protein uS12 (137 aa).

Asp-102 is modified (3-methylthioaspartic acid).

This sequence belongs to the universal ribosomal protein uS12 family. As to quaternary structure, part of the 30S ribosomal subunit. Contacts proteins S8 and S17. May interact with IF1 in the 30S initiation complex.

With S4 and S5 plays an important role in translational accuracy. Functionally, interacts with and stabilizes bases of the 16S rRNA that are involved in tRNA selection in the A site and with the mRNA backbone. Located at the interface of the 30S and 50S subunits, it traverses the body of the 30S subunit contacting proteins on the other side and probably holding the rRNA structure together. The combined cluster of proteins S8, S12 and S17 appears to hold together the shoulder and platform of the 30S subunit. The protein is Small ribosomal subunit protein uS12 of Mesoplasma florum (strain ATCC 33453 / NBRC 100688 / NCTC 11704 / L1) (Acholeplasma florum).